The primary structure comprises 345 residues: Viral Fc-gamma receptor-like protein UL119 (345 aa).

Positions 1-23 are cleaved as a signal peptide; that stretch reads MCSVLAIALVVALLGDMHPGVKS. A disordered region spans residues 23–43; the sequence is SSTTSAVTSPSNTTVTSTTSI. The Virion surface portion of the chain corresponds to 24–293; it reads STTSAVTSPS…IKSDPLFEDR (270 aa). 12 N-linked (GlcNAc...) asparagine; by host glycosylation sites follow: Asn-34, Asn-48, Asn-95, Asn-104, Asn-148, Asn-179, Asn-198, Asn-217, Asn-225, Asn-241, Asn-244, and Asn-260. An Ig-like V-type domain is found at 91–190; that stretch reads QVSLNATCKV…TWDLFTYPIY (100 aa). A helical transmembrane segment spans residues 294–314; that stretch reads LLAYGVLAFLVFMVIILLYVT. Residues 315–345 are Intravirion-facing; sequence YMLARRRDWSYKRLEEPVEEKKHPVPYFKQW.

The protein resides in the virion membrane. In terms of biological role, serves as a receptor for the Fc part of human IgG. May thus be involved in interfering with host Ig-mediated immune responses. This is Viral Fc-gamma receptor-like protein UL119 (UL119/UL118) from Homo sapiens (Human).